A 241-amino-acid chain; its full sequence is tRNA pseudouridine synthase A (241 aa).

Aspartate 51 functions as the Nucleophile in the catalytic mechanism. Tyrosine 110 is a binding site for substrate.

It belongs to the tRNA pseudouridine synthase TruA family. In terms of assembly, homodimer.

The catalysed reaction is uridine(38/39/40) in tRNA = pseudouridine(38/39/40) in tRNA. Its function is as follows. Formation of pseudouridine at positions 38, 39 and 40 in the anticodon stem and loop of transfer RNAs. The protein is tRNA pseudouridine synthase A of Campylobacter jejuni subsp. jejuni serotype O:23/36 (strain 81-176).